Reading from the N-terminus, the 1134-residue chain is Early transcription factor large subunit homolog (1134 aa).

A Helicase ATP-binding domain is found at 52–352 (KGGRAFFPCD…PNGQPLQRQQ (301 aa)). Position 99–106 (99–106 (WQTGTGKS)) interacts with ATP. A DEAH box motif is present at residues 281-284 (DEIH). Residues 524-725 (MMKDILSIIR…EGDKALRKHA (202 aa)) enclose the Helicase C-terminal domain.

It belongs to the DEAD box helicase family. DEAH subfamily.

It localises to the virion. It carries out the reaction ATP + H2O = ADP + phosphate + H(+). In terms of biological role, putative initation factor. The protein is Early transcription factor large subunit homolog of African swine fever virus (isolate Pig/Kenya/KEN-50/1950) (ASFV).